Here is a 254-residue protein sequence, read N- to C-terminus: Triosephosphate isomerase (254 aa).

10–12 is a binding site for substrate; it reads NWK. The active-site Electrophile is H99. The active-site Proton acceptor is E169. Substrate-binding positions include G175, S215, and 236–237; that span reads GG.

The protein belongs to the triosephosphate isomerase family. As to quaternary structure, homodimer.

It is found in the cytoplasm. The enzyme catalyses D-glyceraldehyde 3-phosphate = dihydroxyacetone phosphate. It functions in the pathway carbohydrate biosynthesis; gluconeogenesis. Its pathway is carbohydrate degradation; glycolysis; D-glyceraldehyde 3-phosphate from glycerone phosphate: step 1/1. Its function is as follows. Involved in the gluconeogenesis. Catalyzes stereospecifically the conversion of dihydroxyacetone phosphate (DHAP) to D-glyceraldehyde-3-phosphate (G3P). The protein is Triosephosphate isomerase of Chlamydia abortus (strain DSM 27085 / S26/3) (Chlamydophila abortus).